The primary structure comprises 985 residues: Eukaryotic translation initiation factor 4E transporter (985 aa).

Residues 1–24 are disordered; the sequence is MDRRSMGETESGDAFLDLKKPPAS. A Phosphoserine modification is found at S5. A YXXXXLphi motif motif is present at residues 30 to 36; sequence YTKEELL. S74, S78, S115, S120, S136, and S138 each carry phosphoserine. The interval 131 to 161 is interaction with CSDE1; it reads VSSRRSGSPLEKDSDGLRLLGGRRIGSGRII. The Nuclear localization signal motif lies at 195–211; the sequence is RREFGDSKRVFGERRRN. The interval 208-230 is disordered; that stretch reads RRRNDSYTEEEPEWFSAGPTSQS. Residues 219–240 form an interaction with DDX6 region; that stretch reads PEWFSAGPTSQSETIELTGFDD. Phosphoserine occurs at positions 301, 345, 353, and 374. A Glycyl lysine isopeptide (Lys-Gly) (interchain with G-Cter in SUMO2) cross-link involves residue K410. S417 is subject to Phosphoserine. The Nuclear export signal motif lies at 438-447; that stretch reads VEAGLKGLKV. Residues 448–490 form an interaction with LSM14A region; sequence DQQVKNSTPFMAEHLEETLSAVTNNRQLKKDGDMTAFNKLVST. At K486 the chain carries N6-acetyllysine. 3 positions are modified to phosphoserine: S513, S564, and S587. A Nuclear export signal motif is present at residues 613–638; it reads ITAQMSQLELQQAALEGLALPHDLAV. 2 disordered regions span residues 664–693 and 707–803; these read QQRVTKSPAPVHRGNSSSPAPAASITSMLS and ESKE…PTTP. A Phosphoserine modification is found at S693. Residues 695–713 form an interaction with PATL1 region; the sequence is SFTPTSVIRKMYESKEKSK. Composition is skewed to basic and acidic residues over residues 707 to 717 and 725 to 735; these read ESKEKSKEEPA and DSKEDTQKASE. Low complexity predominate over residues 736–746; sequence ENLLSSSSVPS. A Phosphoserine modification is found at S752. Residues 754 to 776 are compositionally biased toward polar residues; that stretch reads TTNSKLSALQRSSCSTPLSQANR. A phosphoserine mark is found at S920 and S951. The tract at residues 922–953 is disordered; sequence QTTPQNVPSRSGLPHMHSQLEHRPSQRSSSPV. An interaction with LSM14A region spans residues 940–985; the sequence is QLEHRPSQRSSSPVGLAKWFGSDVLQQPLPSMPAKVISVDELEYRQ.

This sequence belongs to the 4E-T/EIF4E-T family. In terms of assembly, interacts (via YXXXXLphi motif) with EIF4E. Interacts (via YXXXXLphi motif) with EIF4E2. Interacts with DDX6. Interacts with CSDE1/UNR. Interacts with CNOT1; promoting association with the CCR4-NOT complex. Interacts with LSM14A; promoting EIF4ENIF1 localization to P-bodies. Interacts with PATL1. Interacts with importin beta only in the presence of importin alpha, suggesting a direct interaction with importin alpha. Interacts with APOBEC3G in an RNA-dependent manner. In terms of processing, phosphorylation by MAPK8/JNK1 and or MAPK9/JNK2 in response to oxidative stress promotes P-body assembly. Phosphorylated during meiotic maturation. As to expression, widely expressed.

The protein resides in the cytoplasm. The protein localises to the P-body. It localises to the nucleus. Its subcellular location is the PML body. It is found in the nucleus speckle. EIF4E-binding protein that regulates translation and stability of mRNAs in processing bodies (P-bodies). Plays a key role in P-bodies to coordinate the storage of translationally inactive mRNAs in the cytoplasm and prevent their degradation. Acts as a binding platform for multiple RNA-binding proteins: promotes deadenylation of mRNAs via its interaction with the CCR4-NOT complex, and blocks decapping via interaction with eIF4E (EIF4E and EIF4E2), thereby protecting deadenylated and repressed mRNAs from degradation. Component of a multiprotein complex that sequesters and represses translation of proneurogenic factors during neurogenesis. Promotes miRNA-mediated translational repression. Required for the formation of P-bodies. Involved in mRNA translational repression mediated by the miRNA effector TNRC6B by protecting TNRC6B-targeted mRNAs from decapping and subsequent decay. Also acts as a nucleoplasmic shuttling protein, which mediates the nuclear import of EIF4E and DDX6 by a piggy-back mechanism. This chain is Eukaryotic translation initiation factor 4E transporter, found in Homo sapiens (Human).